Consider the following 46-residue polypeptide: Iota-conotoxin-like Fi11.8 (46 aa).

A 4-hydroxyproline mark is found at P2 and P11. 4 disulfides stabilise this stretch: C5-C19, C12-C22, C18-C27, and C21-C38. P29 carries the 4-hydroxyproline modification. W33 carries the 6'-bromotryptophan modification. The residue at position 44 (F44) is a D-phenylalanine.

The protein belongs to the conotoxin I1 superfamily. As to expression, expressed by the venom duct.

The protein resides in the secreted. Functionally, iota-conotoxins bind to voltage-gated sodium channels (Nav) and act as agonists by shifting the voltage-dependence of activation to more hyperpolarized levels. Produces general excitatory symptoms. This Conus figulinus (Fig cone) protein is Iota-conotoxin-like Fi11.8.